The following is a 215-amino-acid chain: Oligoribonuclease (215 aa).

One can recognise an Exonuclease domain in the interval 5–170; that stretch reads LVWIDCEMTG…ADIHESIREL (166 aa). The active site involves tyrosine 127.

This sequence belongs to the oligoribonuclease family.

The protein resides in the cytoplasm. Functionally, 3'-to-5' exoribonuclease specific for small oligoribonucleotides. This Mycobacterium ulcerans (strain Agy99) protein is Oligoribonuclease.